The following is a 193-amino-acid chain: Imidazoleglycerol-phosphate dehydratase (193 aa).

Belongs to the imidazoleglycerol-phosphate dehydratase family.

The protein resides in the cytoplasm. The catalysed reaction is D-erythro-1-(imidazol-4-yl)glycerol 3-phosphate = 3-(imidazol-4-yl)-2-oxopropyl phosphate + H2O. It participates in amino-acid biosynthesis; L-histidine biosynthesis; L-histidine from 5-phospho-alpha-D-ribose 1-diphosphate: step 6/9. This Saccharolobus solfataricus (strain ATCC 35092 / DSM 1617 / JCM 11322 / P2) (Sulfolobus solfataricus) protein is Imidazoleglycerol-phosphate dehydratase (hisB).